Reading from the N-terminus, the 223-residue chain is 7-cyano-7-deazaguanine synthase (223 aa).

Leu-8 to Leu-18 contributes to the ATP binding site. Zn(2+)-binding residues include Cys-187, Cys-197, Cys-200, and Cys-203.

The protein belongs to the QueC family. The cofactor is Zn(2+).

The enzyme catalyses 7-carboxy-7-deazaguanine + NH4(+) + ATP = 7-cyano-7-deazaguanine + ADP + phosphate + H2O + H(+). It participates in purine metabolism; 7-cyano-7-deazaguanine biosynthesis. Functionally, catalyzes the ATP-dependent conversion of 7-carboxy-7-deazaguanine (CDG) to 7-cyano-7-deazaguanine (preQ(0)). This Methylococcus capsulatus (strain ATCC 33009 / NCIMB 11132 / Bath) protein is 7-cyano-7-deazaguanine synthase.